The sequence spans 725 residues: Ribonuclease R (725 aa).

An RNB domain is found at 236 to 559 (RKDLRDKLII…QLHRLIKQMV (324 aa)). The S1 motif domain occupies 611–689 (GKSLKAQIVS…NLGKVDVVLE (79 aa)).

The protein belongs to the RNR ribonuclease family. RNase R subfamily.

It localises to the cytoplasm. It catalyses the reaction Exonucleolytic cleavage in the 3'- to 5'-direction to yield nucleoside 5'-phosphates.. 3'-5' exoribonuclease that releases 5'-nucleoside monophosphates and is involved in maturation of structured RNAs. In Mycoplasmopsis pulmonis (strain UAB CTIP) (Mycoplasma pulmonis), this protein is Ribonuclease R.